Here is a 372-residue protein sequence, read N- to C-terminus: Inner membrane protein YbiR (372 aa).

At 1-13 (MSLPFLRTLQGDR) the chain is on the periplasmic side. A run of 2 helical transmembrane segments spans residues 14 to 34 (FFQL…FAPK) and 35 to 55 (SWPA…MLLT). At 56 to 85 (KGVELSGYFDVLGRKMVRRFATERRLAMFM) the chain is on the periplasmic side. Residues 86 to 106 (VLAAALLSTFLTNDVALFIVV) traverse the membrane as a helical segment. Residues 107-122 (PLTITLKRLCEIPVNR) lie on the Cytoplasmic side of the membrane. The chain crosses the membrane as a helical span at residues 123–143 (LIIFEALAVNAGSLLTPIGNP). Residues 144–155 (QNILIWGRSGLS) lie on the Periplasmic side of the membrane. Residues 156–176 (FAGFIAQMAPLAGAMMLTLLL) form a helical membrane-spanning segment. The Cytoplasmic segment spans residues 177 to 208 (LCWCCFPGKAMQYHTGVQTPEWKPRLVWSCLG). The helical transmembrane segment at 209–229 (LYIVFLTALEFKQELWGLVIV) threads the bilayer. Topologically, residues 230–247 (AAGFALLARRVVLSVDWT) are periplasmic. A helical membrane pass occupies residues 248 to 268 (LLLVFMAMFIDVHLLTQLPAL). At 269-283 (QGVLGNVSHLSEPGL) the chain is on the cytoplasmic side. A helical transmembrane segment spans residues 284–304 (WLTAIGLSQVISNVPSTILLL). Topologically, residues 305-309 (NYVPP) are periplasmic. Residues 310 to 330 (SLLLVWAVNVGGFGLLPGSLA) traverse the membrane as a helical segment. Over 331 to 348 (NLIALRMANDRRIWWRFH) the chain is Cytoplasmic. Residues 349–369 (LYSIPMLLWAALVGYVLLVIL) traverse the membrane as a helical segment. Topologically, residues 370-372 (PAN) are periplasmic.

It belongs to the CitM (TC 2.A.11) transporter family.

It localises to the cell inner membrane. The sequence is that of Inner membrane protein YbiR (ybiR) from Escherichia coli (strain K12).